The following is a 99-amino-acid chain: A-type ATP synthase subunit F (99 aa).

The protein belongs to the V-ATPase F subunit family. As to quaternary structure, has multiple subunits with at least A(3), B(3), C, D, E, F, H, I and proteolipid K(x).

The protein resides in the cell membrane. Component of the A-type ATP synthase that produces ATP from ADP in the presence of a proton gradient across the membrane. The chain is A-type ATP synthase subunit F from Methanococcus vannielii (strain ATCC 35089 / DSM 1224 / JCM 13029 / OCM 148 / SB).